The primary structure comprises 376 residues: Immunoglobulin G-binding protein H (376 aa).

The N-terminal stretch at 1-41 (MTRQQTKKNYSLRKLKTGTASVAVALTVLGAGFANQTTVKA) is a signal peptide. Positions 69–271 (TSLENEKLKS…AAKKELEANH (203 aa)) are disordered. Basic and acidic residues-rich tracts occupy residues 72-146 (ENEK…KRYQ), 156-203 (ETEK…DKQI), 211-245 (LSRD…DKQI), and 253-271 (LSRD…EANH). C repeat units lie at residues 153 to 187 (QQLE…EAEH), 195 to 229 (QKLK…EANH), and 237 to 271 (QKLK…EANH). D repeat units lie at residues 272-277 (QKLEAE), 278-283 (AKALKE), 286-291 (AKQAEE), and 293-298 (AKLRAG). Residues 292–348 (LAKLRAGKASDSQTPDTKPGNKAVPGKGQAPQAGTKPNQNKAPMKETKRQLPSTGET) are disordered. The LPXTG sorting signal motif lies at 342–346 (LPSTG). Thr345 is modified (pentaglycyl murein peptidoglycan amidated threonine). A propeptide spans 346–376 (GETANPFFTAAALTVMATAGVAAVVKRKEEN) (removed by sortase).

It belongs to the M protein family.

The protein localises to the secreted. Its subcellular location is the cell wall. In Streptococcus pyogenes serotype M1, this protein is Immunoglobulin G-binding protein H.